The following is a 169-amino-acid chain: uncharacterized protein (169 aa).

Disordered stretches follow at residues 32-53 (VSGPDWNPNTSQPMPGSPAPAP) and 148-169 (VSGSRGREGRLRPQCAGSAGGA).

This is an uncharacterized protein from Homo sapiens (Human).